The chain runs to 335 residues: Pharynx and intestine in excess protein 1 (335 aa).

A Glycyl lysine isopeptide (Lys-Gly) (interchain with G-Cter in SUMO) cross-link involves residue Lys-68. A C3H1-type 1 zinc finger spans residues 98–126 (EYKTRLCDAFRREGYCPYNDNCTYAHGQD). Residues 130-156 (VPRRRQEYYSRDPPRERRDSRSRRDDV) show a composition bias toward basic and acidic residues. The interval 130–188 (VPRRRQEYYSRDPPRERRDSRSRRDDVDTTINRSSSSASKHHDENRRPSNNHGSSNRRQ) is disordered. 2 stretches are compositionally biased toward polar residues: residues 158–167 (TTINRSSSSA) and 177–187 (PSNNHGSSNRR). The C3H1-type 2 zinc finger occupies 184–211 (SNRRQICHNFERGNCRYGPRCRFIHVEQ). The tract at residues 288 to 291 (MAPT) is required for inhibition of Ser-2 phosphorylation.

In terms of assembly, interacts with hda-1, let-418 and mep-1. Interacts (via C terminus) with cit-1.1 (via C terminus). Sumoylated in adult germ cells.

The protein localises to the nucleus. Its subcellular location is the cytoplasm. It is found in the cytoskeleton. It localises to the microtubule organizing center. The protein resides in the centrosome. The protein localises to the spindle. Its subcellular location is the cytoplasmic granule. Its function is as follows. Maternally provided pie-1 is required for germline cell fate determination. Functions as a repressor of RNA polymerase II-dependent gene expression in the developing germline. Required for expression of nos-2 in P4 germline blastomere cells. Inhibits the histone deacetylase activity of hda-1. Represses transcriptional activation of cdk-9 and cit-1.1, which are members of the P-TEFb complex. Acts redundantly with gei-17 to promote piRNA-mediated silencing and fertility in adult germline. Promotes the sumoylation of hda-1 in adult animals but not in embryos thereby regulating its interaction with mep-1. The polypeptide is Pharynx and intestine in excess protein 1 (Caenorhabditis elegans).